A 121-amino-acid chain; its full sequence is Large ribosomal subunit protein uL14c (121 aa).

Component of the chloroplast large ribosomal subunit (LSU). Mature 70S chloroplast ribosomes of higher plants consist of a small (30S) and a large (50S) subunit. The 30S small subunit contains 1 molecule of ribosomal RNA (16S rRNA) and 24 different proteins. The 50S large subunit contains 3 rRNA molecules (23S, 5S and 4.5S rRNA) and 33 different proteins.

It localises to the plastid. The protein localises to the chloroplast. In terms of biological role, component of the chloroplast ribosome (chloro-ribosome), a dedicated translation machinery responsible for the synthesis of chloroplast genome-encoded proteins, including proteins of the transcription and translation machinery and components of the photosynthetic apparatus. In Spinacia oleracea (Spinach), this protein is Large ribosomal subunit protein uL14c.